Reading from the N-terminus, the 91-residue chain is Dynein 8 kDa light chain, flagellar outer arm (91 aa).

Belongs to the dynein light chain family. In terms of assembly, consists of at least 3 heavy chains (alpha, beta and gamma), 2 intermediate chains and 8 light chains.

The protein localises to the cytoplasm. It localises to the cytoskeleton. Its subcellular location is the flagellum axoneme. This Chlamydomonas reinhardtii (Chlamydomonas smithii) protein is Dynein 8 kDa light chain, flagellar outer arm.